A 284-amino-acid chain; its full sequence is Diaminopimelate epimerase (284 aa).

Positions 20, 53, and 73 each coordinate substrate. Catalysis depends on C82, which acts as the Proton donor. Residues 83 to 84 (GN), N167, N200, and 218 to 219 (ER) contribute to the substrate site. Catalysis depends on C227, which acts as the Proton acceptor. 228-229 (GS) is a substrate binding site.

Belongs to the diaminopimelate epimerase family. As to quaternary structure, homodimer.

It localises to the cytoplasm. The enzyme catalyses (2S,6S)-2,6-diaminopimelate = meso-2,6-diaminopimelate. Its pathway is amino-acid biosynthesis; L-lysine biosynthesis via DAP pathway; DL-2,6-diaminopimelate from LL-2,6-diaminopimelate: step 1/1. In terms of biological role, catalyzes the stereoinversion of LL-2,6-diaminopimelate (L,L-DAP) to meso-diaminopimelate (meso-DAP), a precursor of L-lysine and an essential component of the bacterial peptidoglycan. The polypeptide is Diaminopimelate epimerase (Xylella fastidiosa (strain M23)).